Here is an 83-residue protein sequence, read N- to C-terminus: Small ribosomal subunit protein eS21 (83 aa).

Belongs to the eukaryotic ribosomal protein eS21 family. As to quaternary structure, component of the 40S small ribosomal subunit. Interacts with sta.

It localises to the cytoplasm. It is found in the cytosol. The protein resides in the rough endoplasmic reticulum. Its function is as follows. May be an associated component of the ribosome rather than a core structural subunit. May act as a translation initiation factor. Has a role in regulation of cell proliferation in the hematopoietic organs and the imaginal disks of larva. In Drosophila ananassae (Fruit fly), this protein is Small ribosomal subunit protein eS21 (RpS21).